Here is a 743-residue protein sequence, read N- to C-terminus: Serine/threonine-protein kinase GD17699 (743 aa).

The tract at residues 54–78 (NVQEDNSYNRDCDSPVSSSSEPEKE) is disordered. 2 consecutive Doublecortin domains span residues 154-240 (LRIK…VEYN) and 309-392 (RIVT…AEDF). In terms of domain architecture, Protein kinase spans 473-731 (YTLGRIIGDG…SEDILDHPWT (259 aa)). Residues 479 to 487 (IGDGNFAIV) and Lys502 each bind ATP. Asp594 functions as the Proton acceptor in the catalytic mechanism.

The protein belongs to the protein kinase superfamily. CAMK Ser/Thr protein kinase family. CaMK subfamily.

The catalysed reaction is L-seryl-[protein] + ATP = O-phospho-L-seryl-[protein] + ADP + H(+). It catalyses the reaction L-threonyl-[protein] + ATP = O-phospho-L-threonyl-[protein] + ADP + H(+). The sequence is that of Serine/threonine-protein kinase GD17699 from Drosophila simulans (Fruit fly).